The following is a 155-amino-acid chain: Aspartate carbamoyltransferase regulatory chain (155 aa).

Cys-111, Cys-116, Cys-137, and Cys-140 together coordinate Zn(2+).

Belongs to the PyrI family. In terms of assembly, contains catalytic and regulatory chains. Zn(2+) is required as a cofactor.

Functionally, involved in allosteric regulation of aspartate carbamoyltransferase. The polypeptide is Aspartate carbamoyltransferase regulatory chain (Haloarcula marismortui (strain ATCC 43049 / DSM 3752 / JCM 8966 / VKM B-1809) (Halobacterium marismortui)).